A 722-amino-acid polypeptide reads, in one-letter code: Phenylalanine ammonia-lyase lenB (722 aa).

The active-site Proton donor/acceptor is Tyr-83. The interval 117–136 (LPTDRSSSRPSSRYPHGLRS) is disordered. The 5-imidazolinone (Ala-Gly) cross-link spans 190–192 (ASG). Ser-191 carries the post-translational modification 2,3-didehydroalanine (Ser). (E)-cinnamate-binding residues include Asn-247, Gln-334, Arg-340, Asn-370, Lys-441, Glu-469, and Asn-472.

The protein belongs to the PAL/histidase family. Contains an active site 4-methylidene-imidazol-5-one (MIO), which is formed autocatalytically by cyclization and dehydration of residues Ala-Ser-Gly.

The enzyme catalyses L-phenylalanine = (E)-cinnamate + NH4(+). It participates in alkaloid biosynthesis. Functionally, phenylalanine ammonia-lyase; part of the gene cluster that mediates the biosynthesis of the ergot alkaloids lentopeptins A and B. Within the pathway, lenB provides the cinnamic acid starter unit for the synthesis of the N-acyldiketopiperazine intermediate by the NRPS lenA. Cinnamic acid is condensed with the Ala-Val-Ala peptide chain by lenA which leads to the N-acyldiketopiperazine intermediate which in turn is converted into lentopeptins A and B by the cytochrome P450 monooxygenase lenC. This Aspergillus lentulus protein is Phenylalanine ammonia-lyase lenB.